Reading from the N-terminus, the 335-residue chain is Acetyl-coenzyme A carboxylase carboxyl transferase subunit alpha (335 aa).

The 261-residue stretch at 48–308 folds into the CoA carboxyltransferase C-terminal domain; sequence TLELKVDALR…KEILIEELKA (261 aa).

The protein belongs to the AccA family. In terms of assembly, acetyl-CoA carboxylase is a heterohexamer composed of biotin carboxyl carrier protein (AccB), biotin carboxylase (AccC) and two subunits each of ACCase subunit alpha (AccA) and ACCase subunit beta (AccD).

Its subcellular location is the cytoplasm. The catalysed reaction is N(6)-carboxybiotinyl-L-lysyl-[protein] + acetyl-CoA = N(6)-biotinyl-L-lysyl-[protein] + malonyl-CoA. It functions in the pathway lipid metabolism; malonyl-CoA biosynthesis; malonyl-CoA from acetyl-CoA: step 1/1. Functionally, component of the acetyl coenzyme A carboxylase (ACC) complex. First, biotin carboxylase catalyzes the carboxylation of biotin on its carrier protein (BCCP) and then the CO(2) group is transferred by the carboxyltransferase to acetyl-CoA to form malonyl-CoA. This is Acetyl-coenzyme A carboxylase carboxyl transferase subunit alpha from Pelodictyon phaeoclathratiforme (strain DSM 5477 / BU-1).